Reading from the N-terminus, the 788-residue chain is Response regulator SSK1 (788 aa).

Residues 534–691 enclose the Response regulatory domain; sequence NVLIVEDNII…WLERKVKEWG (158 aa). The residue at position 583 (Asp-583) is a 4-aspartylphosphate.

It belongs to the SSK1 family.

Its subcellular location is the cytoplasm. Functionally, two-domain response regulator protein in the two-component signal transduction system of the HOG1 pathway. Controls high-osmolarity adaptation and fungicide sensitivity via its regulation of the phosphorylation of HOG1. This is Response regulator SSK1 from Cochliobolus heterostrophus (strain C5 / ATCC 48332 / race O) (Southern corn leaf blight fungus).